Here is a 197-residue protein sequence, read N- to C-terminus: Nucleoid occlusion factor SlmA (197 aa).

The HTH tetR-type domain occupies isoleucine 7–leucine 67. The H-T-H motif DNA-binding region spans threonine 30–phenylalanine 49. Residues alanine 110–glutamate 130 are a coiled coil.

This sequence belongs to the nucleoid occlusion factor SlmA family. Homodimer. Interacts with FtsZ.

The protein localises to the cytoplasm. It is found in the nucleoid. In terms of biological role, required for nucleoid occlusion (NO) phenomenon, which prevents Z-ring formation and cell division over the nucleoid. Acts as a DNA-associated cell division inhibitor that binds simultaneously chromosomal DNA and FtsZ, and disrupts the assembly of FtsZ polymers. SlmA-DNA-binding sequences (SBS) are dispersed on non-Ter regions of the chromosome, preventing FtsZ polymerization at these regions. This Shewanella sp. (strain W3-18-1) protein is Nucleoid occlusion factor SlmA.